Here is a 417-residue protein sequence, read N- to C-terminus: Acetate kinase (417 aa).

Position 7 (Asn-7) interacts with Mg(2+). Lys-14 contacts ATP. Arg-104 contacts substrate. The active-site Proton donor/acceptor is Asp-162. ATP-binding positions include 222–226 (HLGNG), 297–299 (DMR), and 346–350 (GIGEN). Residue Glu-401 participates in Mg(2+) binding.

It belongs to the acetokinase family. In terms of assembly, homodimer. The cofactor is Mg(2+). It depends on Mn(2+) as a cofactor.

The protein localises to the cytoplasm. The enzyme catalyses acetate + ATP = acetyl phosphate + ADP. It participates in metabolic intermediate biosynthesis; acetyl-CoA biosynthesis; acetyl-CoA from acetate: step 1/2. Its function is as follows. Catalyzes the formation of acetyl phosphate from acetate and ATP. Can also catalyze the reverse reaction. This chain is Acetate kinase, found in Chloroherpeton thalassium (strain ATCC 35110 / GB-78).